The sequence spans 328 residues: Phosphate acyltransferase (328 aa).

Belongs to the PlsX family. In terms of assembly, homodimer. Probably interacts with PlsY.

The protein resides in the cytoplasm. It catalyses the reaction a fatty acyl-[ACP] + phosphate = an acyl phosphate + holo-[ACP]. It participates in lipid metabolism; phospholipid metabolism. In terms of biological role, catalyzes the reversible formation of acyl-phosphate (acyl-PO(4)) from acyl-[acyl-carrier-protein] (acyl-ACP). This enzyme utilizes acyl-ACP as fatty acyl donor, but not acyl-CoA. The sequence is that of Phosphate acyltransferase from Pseudothermotoga lettingae (strain ATCC BAA-301 / DSM 14385 / NBRC 107922 / TMO) (Thermotoga lettingae).